Consider the following 762-residue polypeptide: Phospholipase D alpha 4 (762 aa).

The region spanning 1-116 (MELEEQKKYF…VINGFFPLIA (116 aa)) is the C2 domain. Position 172 (D172) interacts with Ca(2+). The PLD phosphodiesterase 1 domain maps to 301–339 (TAFAHHQKTITLDTRVTNSSTKEREIMSFLGGFDLCDGR). Catalysis depends on residues H306, K308, and D313. H306 provides a ligand contact to a 1,2-diacyl-sn-glycero-3-phosphate. Ca(2+) contacts are provided by H345 and H377. 2 residues coordinate a 1,2-diacyl-sn-glycero-3-phosphate: Q477 and H615. The PLD phosphodiesterase 2 domain occupies 610-637 (FMVYVHSKLMIVDDTYILIGSANINQRS). Catalysis depends on residues H615, K617, and D622. E671 contributes to the Ca(2+) binding site.

Belongs to the phospholipase D family. C2-PLD subfamily. The cofactor is Ca(2+). Expressed in roots, leaves, stems, siliques,flowers and inflorescences.

The protein localises to the cell membrane. The enzyme catalyses a 1,2-diacyl-sn-glycero-3-phosphocholine + H2O = a 1,2-diacyl-sn-glycero-3-phosphate + choline + H(+). Functionally, hydrolyzes glycerol-phospholipids at the terminal phosphodiesteric bond to generate phosphatidic acids (PA). Promotes growth and plays a role in nitrogen signaling. The protein is Phospholipase D alpha 4 of Arabidopsis thaliana (Mouse-ear cress).